The primary structure comprises 23 residues: Paralytic peptide 1 (23 aa).

Cys-7 and Cys-19 form a disulfide bridge.

The protein belongs to the GBP/PSP1/paralytic peptide family. As to expression, hemolymph.

Causes rapid, rigid paralysis when injected into Lepidopteran larvae. The physiological role may be to reduce hemolymph loss following injury and promote wound healing. The sequence is that of Paralytic peptide 1 from Heliothis virescens (Tobacco budworm moth).